We begin with the raw amino-acid sequence, 549 residues long: Probable protein kinase UbiB (549 aa).

In terms of domain architecture, Protein kinase spans 123 to 501; it reads DFNEIPLASA…QQQAHKSNYL (379 aa). ATP contacts are provided by residues 129–137 and lysine 152; that span reads LASASISQV. The active-site Proton acceptor is the aspartate 287. 2 helical membrane passes run 496–516 and 520–540; these read HKSN…TLLI and ATLW…FVGW.

It belongs to the ABC1 family. UbiB subfamily.

The protein resides in the cell inner membrane. The protein operates within cofactor biosynthesis; ubiquinone biosynthesis [regulation]. Its function is as follows. Is probably a protein kinase regulator of UbiI activity which is involved in aerobic coenzyme Q (ubiquinone) biosynthesis. In Shewanella baltica (strain OS223), this protein is Probable protein kinase UbiB.